Consider the following 725-residue polypeptide: LPS-assembly protein LptD (725 aa).

Positions 1-25 are cleaved as a signal peptide; it reads MSLLSKLHLILYICLLLLPLRFVNA.

It belongs to the LptD family. As to quaternary structure, component of the lipopolysaccharide transport and assembly complex. Interacts with LptE and LptA.

The protein localises to the cell outer membrane. Together with LptE, is involved in the assembly of lipopolysaccharide (LPS) at the surface of the outer membrane. The protein is LPS-assembly protein LptD of Nitrosomonas eutropha (strain DSM 101675 / C91 / Nm57).